Consider the following 144-residue polypeptide: Putative golgin subfamily A member 2B (144 aa).

Disordered stretches follow at residues 1-20 (MDSE…PEDL) and 95-132 (SCGR…EAAG). A compositionally biased stretch (gly residues) spans 110–131 (AEGGGVHQQAGPGQGRGEGEAA).

It belongs to the GOLGA2 family.

The protein is Putative golgin subfamily A member 2B (GOLGA2P5) of Homo sapiens (Human).